The following is a 92-amino-acid chain: Probable Fe(2+)-trafficking protein (92 aa).

This sequence belongs to the Fe(2+)-trafficking protein family.

In terms of biological role, could be a mediator in iron transactions between iron acquisition and iron-requiring processes, such as synthesis and/or repair of Fe-S clusters in biosynthetic enzymes. This is Probable Fe(2+)-trafficking protein from Shewanella oneidensis (strain ATCC 700550 / JCM 31522 / CIP 106686 / LMG 19005 / NCIMB 14063 / MR-1).